We begin with the raw amino-acid sequence, 1942 residues long: Myosin-1 (1942 aa).

A Myosin N-terminal SH3-like domain is found at 33-82 (DAKSSVFVVDAKESFVKATVQSREGGKVTAKTEGGTTVTVKDDQVYPMNP). Residue Ser-36 is modified to Phosphoserine. 2 positions are modified to phosphothreonine: Thr-64 and Thr-69. The Myosin motor domain maps to 86 to 785 (DKIEDMAMMT…LLGLLEEMRD (700 aa)). An N6,N6,N6-trimethyllysine modification is found at Lys-130. Position 179–186 (179–186 (GESGAGKT)) interacts with ATP. A Phosphotyrosine modification is found at Tyr-389. Thr-419 carries the post-translational modification Phosphothreonine. Phosphotyrosine is present on Tyr-424. Ser-625 is modified (phosphoserine). The tract at residues 662-684 (LNKLMTNLRSTHPHFVRCIIPNE) is actin-binding. The residue at position 760 (His-760) is a Pros-methylhistidine. Residues 764–778 (KFGHTKVFFKAGLLG) are actin-binding. The IQ domain maps to 788–817 (LAQLITRTQAMCRGYLARVEYQKMVERRES). A coiled-coil region spans residues 846–1942 (LLKSAETEKE…EVHTKIISEE (1097 aa)). 5 positions are modified to phosphoserine: Ser-1095, Ser-1099, Ser-1165, Ser-1240, and Ser-1246. A disordered region spans residues 1156-1175 (RLEEAGGATSAQIEMNKKRE). Thr-1258 bears the Phosphothreonine mark. Residue Ser-1264 is modified to Phosphoserine. A phosphothreonine mark is found at Thr-1268 and Thr-1289. Residues Ser-1291, Ser-1295, Ser-1306, and Ser-1309 each carry the phosphoserine modification. At Tyr-1467 the chain carries Phosphotyrosine. Thr-1470 bears the Phosphothreonine mark. At Ser-1477 the chain carries Phosphoserine. A Phosphotyrosine modification is found at Tyr-1495. Ser-1498 carries the post-translational modification Phosphoserine. Thr-1504 carries the phosphothreonine modification. Position 1517 is a phosphoserine (Ser-1517). Thr-1520 is modified (phosphothreonine). Residues Ser-1545, Ser-1557, Ser-1577, Ser-1603, Ser-1606, Ser-1717, and Ser-1729 each carry the phosphoserine modification. Residues Thr-1733 and Thr-1739 each carry the phosphothreonine modification. Ser-1742 carries the phosphoserine modification.

The protein belongs to the TRAFAC class myosin-kinesin ATPase superfamily. Myosin family. Muscle myosin is a hexameric protein that consists of 2 heavy chain subunits (MHC), 2 alkali light chain subunits (MLC) and 2 regulatory light chain subunits (MLC-2). Interacts with SLC26A5. As to expression, expressed in the cochlea (at protein level). Strongly expressed in spiral ganglion neurons with axonal sprouts and supporting cells around hair cells. In the organ of Corti, it is expressed in inner and outer hair cells, and in supporting cells.

The protein resides in the cytoplasm. It localises to the myofibril. Functionally, required for normal hearing. It plays a role in cochlear amplification of auditory stimuli, likely through the positive regulation of prestin (SLC26A5) activity and outer hair cell (OHC) electromotility. This chain is Myosin-1, found in Mus musculus (Mouse).